We begin with the raw amino-acid sequence, 92 residues long: UPF0250 protein COSY_0496 (92 aa).

This sequence belongs to the UPF0250 family.

The chain is UPF0250 protein COSY_0496 from Vesicomyosocius okutanii subsp. Calyptogena okutanii (strain HA).